A 71-amino-acid chain; its full sequence is UPF0346 protein SPT_1257 (71 aa).

Belongs to the UPF0346 family.

The chain is UPF0346 protein SPT_1257 from Streptococcus pneumoniae (strain Taiwan19F-14).